The primary structure comprises 123 residues: Large ribosomal subunit protein uL22c (123 aa).

Belongs to the universal ribosomal protein uL22 family. Part of the 50S ribosomal subunit.

It localises to the plastid. Its subcellular location is the chloroplast. Its function is as follows. This protein binds specifically to 23S rRNA. The globular domain of the protein is located near the polypeptide exit tunnel on the outside of the subunit, while an extended beta-hairpin is found that lines the wall of the exit tunnel in the center of the 70S ribosome. The polypeptide is Large ribosomal subunit protein uL22c (rpl22) (Illicium oligandrum (Star anise)).